A 37-amino-acid polypeptide reads, in one-letter code: Alpha-conotoxin TxID (37 aa).

Positions 1 to 21 are excised as a propeptide; that stretch reads FDGRNAAGNDKMSALMALTTR. 2 disulfides stabilise this stretch: Cys23-Cys29 and Cys24-Cys36. Cys36 carries the cysteine amide modification.

The protein belongs to the conotoxin A superfamily. Unmodified Met-32 is essential for toxin binding to rat alpha-3-beta-4/CHRNA3-CHRNB4 nAChR. An oxidation of this methionine provokes a 13.3-fold decrease in inhibitory potency (IC(50)=245 nM instead of 18 nM). Owing to its potent activity, derivatives of this toxin have a potential in the development of a novel drug. Unfortunately, the oxidation of the methionine is readily to happen during toxin synthesis and oxidation steps as well as under oxidative environment in vivo, which should still be considered to find a solution to this major drawback. As to expression, expressed by the venom duct.

It is found in the secreted. Its function is as follows. Alpha-conotoxins act on postsynaptic membranes, they bind to the nicotinic acetylcholine receptors (nAChR) and thus inhibit them. This toxin inhibits alpha-3-beta-4/CHRNA3-CHRNB4 (IC(50)=3.6-18.38 nM), alpha-6/alpha-3-beta-4 (CHRNA6/CHRNA3-CHRNB4) (IC(50)=33.9-94.1 nM), and alpha-2-beta-4/CHRNA2-CHRNB4 (IC(50)=4550 nM) nAChRs. The toxin competes with agonists in the orthosteric binding site of alpha-3-beta-4/CHRNA3-CHRNB4 and alpha-6-beta-4/CHRNA6-CHRNB4. In Conus textile (Cloth-of-gold cone), this protein is Alpha-conotoxin TxID.